The chain runs to 528 residues: MTTIERITTPRIRIFDTTLRDGEQSPGCSMSPPQKLVMARALDELGVDIIETGFPASSQSDREAMALIGRELRRPSLSLAVLSRCLQADIETSARALEAAANPRLHVFLSTSPLHREHKLRMTREQVLESVRKHVSLARSYIDDVEFSAEDATRTELDYLIEVARVAIAAGATTINLPDTVGFTTPEEIRAMFQQVIAGVADVPNAANVIFSAHCHNDLGLAVANSLAAIEGGARQVECTVNGIGERAGNCSLEEIAMVLKVRQAFYEQDSSINTPRIVGTSQLLQRLVGMPVQRNKAIVGANAFAHESGIHQHGMLRHRGTYEIMRPEDVGWEDSQMVLGRHSGRAAVEARLRALGFWLDEDELKLVFEQFKGLCEQQRVVTDADLQTLMQGGSNAQGYRLASMTISDVGSRANALVELSDPDGNRVAETAQGDGPVDALFGALSAATGVQLMLDSYHVHSVGIGADARGEANLSVRHEGVEYDGTGTSKDIIEASALAWLDVANRLLRQRQATAHNSTDVPTPATA.

Residues 12-279 (IRIFDTTLRD…DSSINTPRIV (268 aa)) enclose the Pyruvate carboxyltransferase domain. Residues Asp-21, His-214, His-216, and Asn-250 each coordinate Mn(2+). Residues 401–528 (RLASMTISDV…STDVPTPATA (128 aa)) form a regulatory domain region.

This sequence belongs to the alpha-IPM synthase/homocitrate synthase family. LeuA type 1 subfamily. As to quaternary structure, homodimer. Requires Mn(2+) as cofactor.

It is found in the cytoplasm. It carries out the reaction 3-methyl-2-oxobutanoate + acetyl-CoA + H2O = (2S)-2-isopropylmalate + CoA + H(+). It participates in amino-acid biosynthesis; L-leucine biosynthesis; L-leucine from 3-methyl-2-oxobutanoate: step 1/4. Its function is as follows. Catalyzes the condensation of the acetyl group of acetyl-CoA with 3-methyl-2-oxobutanoate (2-ketoisovalerate) to form 3-carboxy-3-hydroxy-4-methylpentanoate (2-isopropylmalate). The chain is 2-isopropylmalate synthase from Stenotrophomonas maltophilia (strain K279a).